The sequence spans 37 residues: Mu-agatoxin-Aa1f (37 aa).

4 disulfide bridges follow: Cys2–Cys18, Cys9–Cys23, Cys17–Cys33, and Cys25–Cys31. At Asn37 the chain carries Asparagine amide.

It belongs to the neurotoxin 07 (Beta/delta-agtx) family. 03 (aga-4) subfamily. Aga sub-subfamily. As to expression, expressed by the venom gland.

Its subcellular location is the secreted. Functionally, insecticidal neurotoxin that induces an irreversible spastic paralysis when injected into insects. Modifies presynaptic voltage-gated sodium channels (Nav), causing them to open at the normal resting potential of the nerve. This leads to spontaneous release of neurotransmitter and repetitive action potentials in motor neurons. In Agelenopsis aperta (North American funnel-web spider), this protein is Mu-agatoxin-Aa1f.